The chain runs to 234 residues: Demethylmenaquinone methyltransferase (234 aa).

S-adenosyl-L-methionine is bound by residues threonine 62, aspartate 80, 100 to 101 (DA), and serine 117.

It belongs to the class I-like SAM-binding methyltransferase superfamily. MenG/UbiE family.

The catalysed reaction is a 2-demethylmenaquinol + S-adenosyl-L-methionine = a menaquinol + S-adenosyl-L-homocysteine + H(+). Its pathway is quinol/quinone metabolism; menaquinone biosynthesis; menaquinol from 1,4-dihydroxy-2-naphthoate: step 2/2. Methyltransferase required for the conversion of demethylmenaquinol (DMKH2) to menaquinol (MKH2). This Mycobacterium bovis (strain ATCC BAA-935 / AF2122/97) protein is Demethylmenaquinone methyltransferase.